Here is a 253-residue protein sequence, read N- to C-terminus: Tetraspanin-3 (253 aa).

Residues 1-11 (MGQCGITSSKT) lie on the Cytoplasmic side of the membrane. Residues 12–32 (VLVFLNLIFWGAAGILCYVGA) form a helical membrane-spanning segment. Over 33 to 50 (YVFITYDDYDHFFEDVYT) the chain is Extracellular. The chain crosses the membrane as a helical span at residues 51-71 (LFPAVVIIAVGALLFIIGLIG). Residues 72-85 (CCATIRESRCGLAT) lie on the Cytoplasmic side of the membrane. A helical transmembrane segment spans residues 86–106 (FVFILLLVFVTEVVVVVLGYV). Residues 107 to 212 (YRAKVENEVD…KKLQEILMHV (106 aa)) lie on the Extracellular side of the membrane. N-linked (GlcNAc...) asparagine glycosylation is found at Asn-127, Asn-152, Asn-167, and Asn-183. A helical membrane pass occupies residues 213–233 (IWAALAFAAIQLLGMLCACIV). Residues 234–253 (LCRRSRDPAYELLITGGTYA) lie on the Cytoplasmic side of the membrane.

Belongs to the tetraspanin (TM4SF) family. As to quaternary structure, interacts with claudin-11/CLDN11 and integrins.

It is found in the membrane. Functionally, regulates the proliferation and migration of oligodendrocytes, a process essential for normal myelination and repair. The polypeptide is Tetraspanin-3 (Tspan3) (Mus musculus (Mouse)).